A 307-amino-acid chain; its full sequence is Ribonuclease Z (307 aa).

Positions 63, 65, 67, 68, 140, 211, and 269 each coordinate Zn(2+). Asp67 functions as the Proton acceptor in the catalytic mechanism.

This sequence belongs to the RNase Z family. Homodimer. It depends on Zn(2+) as a cofactor.

It carries out the reaction Endonucleolytic cleavage of RNA, removing extra 3' nucleotides from tRNA precursor, generating 3' termini of tRNAs. A 3'-hydroxy group is left at the tRNA terminus and a 5'-phosphoryl group is left at the trailer molecule.. In terms of biological role, zinc phosphodiesterase, which displays some tRNA 3'-processing endonuclease activity. Probably involved in tRNA maturation, by removing a 3'-trailer from precursor tRNA. The chain is Ribonuclease Z from Bacillus licheniformis (strain ATCC 14580 / DSM 13 / JCM 2505 / CCUG 7422 / NBRC 12200 / NCIMB 9375 / NCTC 10341 / NRRL NRS-1264 / Gibson 46).